Here is a 142-residue protein sequence, read N- to C-terminus: Hemoglobin subunit alpha-A (142 aa).

One can recognise a Globin domain in the interval 2–142; the sequence is VLSAADKTNV…VGAVLTAKYR (141 aa). O2 is bound at residue His59. His88 is a binding site for heme b.

Belongs to the globin family. As to quaternary structure, heterotetramer of two alpha chains and two beta chains. In terms of tissue distribution, red blood cells.

Functionally, involved in oxygen transport from the lung to the various peripheral tissues. The polypeptide is Hemoglobin subunit alpha-A (HBAA) (Mareca penelope (Eurasian wigeon)).